Here is a 59-residue protein sequence, read N- to C-terminus: Small ribosomal subunit protein bS21 (59 aa).

The tract at residues 39 to 59 (ETPVEKYKRKQRLKNRTKRRR) is disordered. A compositionally biased stretch (basic residues) spans 45–59 (YKRKQRLKNRTKRRR).

It belongs to the bacterial ribosomal protein bS21 family.

The protein is Small ribosomal subunit protein bS21 of Prochlorococcus marinus (strain SARG / CCMP1375 / SS120).